A 618-amino-acid polypeptide reads, in one-letter code: Delta-like protein 3 (618 aa).

A signal peptide spans 1–26 (MVSPRMSGLLSQTVILALIFLPQTRP). The Extracellular portion of the chain corresponds to 27 to 492 (AGVFELQIHS…LRPGDPQRYL (466 aa)). A DSL domain is found at 176–215 (ARCEPPAVGTACTRLCRPRSAPSRCGPGLRPCAPLEDECE). EGF-like domains are found at residues 216 to 249 (APLV…PLCT), 274 to 310 (GPGP…LRCE), 312 to 351 (SGVT…SNCE), 353 to 389 (RVDR…PRCE), 391 to 427 (DLDD…RDCR), and 429 to 465 (RADP…ARCE). 18 disulfides stabilise this stretch: cysteine 220/cysteine 231, cysteine 224/cysteine 237, cysteine 239/cysteine 248, cysteine 278/cysteine 289, cysteine 283/cysteine 298, cysteine 300/cysteine 309, cysteine 316/cysteine 327, cysteine 321/cysteine 339, cysteine 341/cysteine 350, cysteine 357/cysteine 368, cysteine 362/cysteine 377, cysteine 379/cysteine 388, cysteine 395/cysteine 406, cysteine 400/cysteine 415, cysteine 417/cysteine 426, cysteine 433/cysteine 444, cysteine 438/cysteine 453, and cysteine 455/cysteine 464. A helical membrane pass occupies residues 493–513 (LPPALGLLVAAGVAGAALLLV). Residues 514-618 (HVRRRGHSQD…PYPSSILSVK (105 aa)) lie on the Cytoplasmic side of the membrane. The segment covering 546 to 562 (NLRTQEGSGDGPSSSVD) has biased composition (polar residues). Positions 546 to 566 (NLRTQEGSGDGPSSSVDWNRP) are disordered.

Can bind and activate Notch-1 or another Notch receptor. Post-translationally, ubiquitinated by MIB (MIB1 or MIB2), leading to its endocytosis and subsequent degradation.

It localises to the membrane. In terms of biological role, inhibits primary neurogenesis. May be required to divert neurons along a specific differentiation pathway. Plays a role in the formation of somite boundaries during segmentation of the paraxial mesoderm. This Homo sapiens (Human) protein is Delta-like protein 3 (DLL3).